The chain runs to 173 residues: Crossover junction endodeoxyribonuclease RuvC (173 aa).

Catalysis depends on residues D8, E67, and D139. Mg(2+) contacts are provided by D8, E67, and D139.

Belongs to the RuvC family. As to quaternary structure, homodimer which binds Holliday junction (HJ) DNA. The HJ becomes 2-fold symmetrical on binding to RuvC with unstacked arms; it has a different conformation from HJ DNA in complex with RuvA. In the full resolvosome a probable DNA-RuvA(4)-RuvB(12)-RuvC(2) complex forms which resolves the HJ. The cofactor is Mg(2+).

It localises to the cytoplasm. It catalyses the reaction Endonucleolytic cleavage at a junction such as a reciprocal single-stranded crossover between two homologous DNA duplexes (Holliday junction).. In terms of biological role, the RuvA-RuvB-RuvC complex processes Holliday junction (HJ) DNA during genetic recombination and DNA repair. Endonuclease that resolves HJ intermediates. Cleaves cruciform DNA by making single-stranded nicks across the HJ at symmetrical positions within the homologous arms, yielding a 5'-phosphate and a 3'-hydroxyl group; requires a central core of homology in the junction. The consensus cleavage sequence is 5'-(A/T)TT(C/G)-3'. Cleavage occurs on the 3'-side of the TT dinucleotide at the point of strand exchange. HJ branch migration catalyzed by RuvA-RuvB allows RuvC to scan DNA until it finds its consensus sequence, where it cleaves and resolves the cruciform DNA. In Serratia proteamaculans (strain 568), this protein is Crossover junction endodeoxyribonuclease RuvC.